Consider the following 1187-residue polypeptide: Intraflagellar transport protein 122 homolog (1187 aa).

WD repeat units follow at residues Lys16 to Pro54, Gly57 to Thr97, Asn99 to His135, Val137 to Ile175, Gly180 to Asp223, Ser225 to Ile264, Glu266 to Tyr306, and Lys459 to Gln498. A disordered region spans residues Lys1070–Asp1094.

Component of the IFT complex A (IFT-A) complex.

Its subcellular location is the cell projection. The protein resides in the cilium. The protein localises to the cytoplasm. It localises to the cytoskeleton. It is found in the cilium basal body. Required for cilia formation during embryonal development. Acts as a negative regulator of Shh signaling. The polypeptide is Intraflagellar transport protein 122 homolog (ift122) (Danio rerio (Zebrafish)).